Reading from the N-terminus, the 1037-residue chain is Presequence protease, mitochondrial (1037 aa).

A mitochondrion-targeting transit peptide spans M1 to W28. Residue H104 participates in Zn(2+) binding. The active-site Proton acceptor is E107. A Zn(2+)-binding site is contributed by H108. An intrachain disulfide couples C119 to C556. The active site involves E180. Residue E205 participates in Zn(2+) binding. N6-acetyllysine is present on K759. An N6-acetyllysine; alternate modification is found at K770. Position 770 is an N6-succinyllysine; alternate (K770). Over residues G804 to R814 the composition is skewed to basic residues. Positions G804 to H834 are disordered. K849 bears the N6-succinyllysine mark. An N6-acetyllysine modification is found at K884. K946 is subject to N6-succinyllysine.

Belongs to the peptidase M16 family. PreP subfamily. In terms of assembly, monomer and homodimer; homodimerization is induced by binding of the substrate. The cofactor is Zn(2+). In terms of processing, a disulfide bond locks the enzyme in the closed conformation preventing substrate entry into the catalytic chamber. As to expression, widely expressed. Expressed at higher level in muscle and heart compared to brain, pancreas, liver, lung and placenta.

The protein localises to the mitochondrion. It is found in the mitochondrion matrix. With respect to regulation, mainly exists in a closed and catalytically competent conformation but a closed-to-open switch allows substrate entry into the catalytic chamber. Substrate binding induces closure and dimerization. A disulfide bond may lock the enzyme in a closed conformation preventing substrate entry into the catalytic chamber, participating in redox regulation of the enzyme. Inhibited by metal-chelating agents. Inhibited by nickel and zinc excess, and slightly activated by manganese. Its function is as follows. Metalloendopeptidase of the mitochondrial matrix that functions in peptide cleavage and degradation rather than in protein processing. Has an ATP-independent activity. Specifically cleaves peptides in the range of 5 to 65 residues. Shows a preference for cleavage after small polar residues and before basic residues, but without any positional preference. Degrades the transit peptides of mitochondrial proteins after their cleavage. Also degrades other unstructured peptides. It is also able to degrade amyloid-beta protein 40, one of the peptides produced by APP processing, when it accumulates in mitochondrion. It is a highly efficient protease, at least toward amyloid-beta protein 40. Cleaves that peptide at a specific position and is probably not processive, releasing digested peptides intermediates that can be further cleaved subsequently. It is also able to degrade amyloid-beta protein 42. This Homo sapiens (Human) protein is Presequence protease, mitochondrial.